The sequence spans 205 residues: Holliday junction branch migration complex subunit RuvA (205 aa).

Residues 1–64 (MIGKLKGTID…EDQLKLFGFM (64 aa)) are domain I. A domain II region spans residues 65–143 (SALEREWFNL…AFTGDAGSAI (79 aa)). The segment at 144–153 (GLKQELGEGV) is flexible linker. Positions 153–205 (VASAPVSDAVSALTNLGYSRDQAANAIAAALKNGGEGADSAKLIRLGLKELSR) are domain III.

It belongs to the RuvA family. Homotetramer. Forms an RuvA(8)-RuvB(12)-Holliday junction (HJ) complex. HJ DNA is sandwiched between 2 RuvA tetramers; dsDNA enters through RuvA and exits via RuvB. An RuvB hexamer assembles on each DNA strand where it exits the tetramer. Each RuvB hexamer is contacted by two RuvA subunits (via domain III) on 2 adjacent RuvB subunits; this complex drives branch migration. In the full resolvosome a probable DNA-RuvA(4)-RuvB(12)-RuvC(2) complex forms which resolves the HJ.

The protein localises to the cytoplasm. In terms of biological role, the RuvA-RuvB-RuvC complex processes Holliday junction (HJ) DNA during genetic recombination and DNA repair, while the RuvA-RuvB complex plays an important role in the rescue of blocked DNA replication forks via replication fork reversal (RFR). RuvA specifically binds to HJ cruciform DNA, conferring on it an open structure. The RuvB hexamer acts as an ATP-dependent pump, pulling dsDNA into and through the RuvAB complex. HJ branch migration allows RuvC to scan DNA until it finds its consensus sequence, where it cleaves and resolves the cruciform DNA. This is Holliday junction branch migration complex subunit RuvA from Allorhizobium ampelinum (strain ATCC BAA-846 / DSM 112012 / S4) (Agrobacterium vitis (strain S4)).